Consider the following 665-residue polypeptide: Intraflagellar transport protein 70A (665 aa).

TPR repeat units follow at residues 11-44, 45-78, 154-187, 189-221, 393-424, 425-457, and 459-492; these read DGEF…SPRS, RAGL…HPEL, TDGQ…SGYQ, DLSY…GIRQ, LTKQ…EKYI, PVLM…CNDH, and VWKL…HYDN. The stretch at 508–535 forms a coiled coil; it reads YIMTSQNEEAEELMRKIEKEEEQLSYDD. The TPR 8 repeat unit spans residues 544–577; that stretch reads CIVNLVIGTLYCAKGNYEFGISRVIKSLEPYNKK.

It belongs to the TTC30/dfy-1/fleer family.

The protein localises to the cell projection. It localises to the cilium. In terms of biological role, required for polyglutamylation of axonemal tubulin. Plays a role in anterograde intraflagellar transport (IFT), the process by which cilia precursors are transported from the base of the cilium to the site of their incorporation at the tip. The sequence is that of Intraflagellar transport protein 70A from Homo sapiens (Human).